Reading from the N-terminus, the 32-residue chain is Cytochrome b6-f complex subunit 7 (32 aa).

The chain crosses the membrane as a helical span at residues 5 to 25; the sequence is IFGTAAIFWVLIPIGLVGGAL.

The protein belongs to the PetM family. As to quaternary structure, the 4 large subunits of the cytochrome b6-f complex are cytochrome b6, subunit IV (17 kDa polypeptide, PetD), cytochrome f and the Rieske protein, while the 4 small subunits are PetG, PetL, PetM and PetN. The complex functions as a dimer.

Its subcellular location is the cellular thylakoid membrane. In terms of biological role, component of the cytochrome b6-f complex, which mediates electron transfer between photosystem II (PSII) and photosystem I (PSI), cyclic electron flow around PSI, and state transitions. The protein is Cytochrome b6-f complex subunit 7 of Synechococcus sp. (strain CC9902).